Reading from the N-terminus, the 556-residue chain is Formate--tetrahydrofolate ligase (556 aa).

ATP is bound at residue 65–72 (TPAGEGKS).

Belongs to the formate--tetrahydrofolate ligase family.

The catalysed reaction is (6S)-5,6,7,8-tetrahydrofolate + formate + ATP = (6R)-10-formyltetrahydrofolate + ADP + phosphate. The protein operates within one-carbon metabolism; tetrahydrofolate interconversion. The protein is Formate--tetrahydrofolate ligase of Streptococcus equi subsp. equi (strain 4047).